Reading from the N-terminus, the 72-residue chain is Translation initiation factor IF-1 (72 aa).

Residues 1–72 (MSKQDVIELE…SRGRITWRKK (72 aa)) form the S1-like domain.

This sequence belongs to the IF-1 family. Component of the 30S ribosomal translation pre-initiation complex which assembles on the 30S ribosome in the order IF-2 and IF-3, IF-1 and N-formylmethionyl-tRNA(fMet); mRNA recruitment can occur at any time during PIC assembly.

It localises to the cytoplasm. In terms of biological role, one of the essential components for the initiation of protein synthesis. Stabilizes the binding of IF-2 and IF-3 on the 30S subunit to which N-formylmethionyl-tRNA(fMet) subsequently binds. Helps modulate mRNA selection, yielding the 30S pre-initiation complex (PIC). Upon addition of the 50S ribosomal subunit IF-1, IF-2 and IF-3 are released leaving the mature 70S translation initiation complex. The sequence is that of Translation initiation factor IF-1 from Alkaliphilus oremlandii (strain OhILAs) (Clostridium oremlandii (strain OhILAs)).